Here is a 289-residue protein sequence, read N- to C-terminus: Palmitoyl-protein thioesterase 3 (289 aa).

An N-terminal signal peptide occupies residues 1–20; sequence MRILSSLILLIALAIALVSA. Ser-97 is a catalytic residue. 2 N-linked (GlcNAc...) asparagine glycosylation sites follow: Asn-189 and Asn-195. Active-site residues include Asp-210 and His-266. Asn-281 is a glycosylation site (N-linked (GlcNAc...) asparagine).

The protein belongs to the palmitoyl-protein thioesterase family.

It is found in the lysosome. The catalysed reaction is S-hexadecanoyl-L-cysteinyl-[protein] + H2O = L-cysteinyl-[protein] + hexadecanoate + H(+). Functionally, removes thioester-linked fatty acyl groups such as palmitate from modified cysteine residues in proteins or peptides during lysosomal degradation. The protein is Palmitoyl-protein thioesterase 3 (ppt3) of Dictyostelium discoideum (Social amoeba).